The primary structure comprises 276 residues: Non-heme chloroperoxidase (276 aa).

The region spanning 24-254 is the AB hydrolase-1 domain; the sequence is PVVFHHGWPL…NATLKSYEGL (231 aa). Catalysis depends on residues S97, D227, and H256.

The protein belongs to the AB hydrolase superfamily. Bacterial non-heme haloperoxidase / perhydrolase family. In terms of assembly, homodimer.

The polypeptide is Non-heme chloroperoxidase (cpo) (Streptomyces lividans).